A 1598-amino-acid chain; its full sequence is Structural maintenance of chromosomes flexible hinge domain-containing protein GMI1 (1598 aa).

The disordered stretch occupies residues 1191–1218 (VTSAPTSEREESGYSTPHSKTTPPPESG). 2 coiled-coil regions span residues 1258-1301 (TEDL…ASLE) and 1565-1595 (EEMM…FTAM).

In terms of tissue distribution, highly expressed in closed buds and open flowers. Expressed at low levels in roots, stems, cauline leaves and siliques. Expressed in the region of the shoot and floral meristems.

It is found in the nucleus. Functionally, contributes to DNA double-strand break (DSB) repair via somatic homologous recombination. Functions downstream of ATM. This is Structural maintenance of chromosomes flexible hinge domain-containing protein GMI1 from Arabidopsis thaliana (Mouse-ear cress).